The following is a 372-amino-acid chain: Ketol-acid reductoisomerase (NADP(+)) (372 aa).

The tract at residues 1–25 (MTETKTQTETETDEEEGTDTDTALD) is disordered. Residues 10–19 (TETDEEEGTD) are compositionally biased toward acidic residues. The KARI N-terminal Rossmann domain maps to 24–205 (LDTTIYYDDD…GCTRAGAIET (182 aa)). Residues 49–52 (YGSQ), S75, S77, and 107–110 (DTVQ) each bind NADP(+). Residue H131 is part of the active site. G157 is an NADP(+) binding site. One can recognise a KARI C-terminal knotted domain in the interval 206-351 (TFREETETDL…EPLRDLFAWS (146 aa)). D214, E218, E250, and E254 together coordinate Mg(2+). S275 lines the substrate pocket. Residues 351-372 (SDNEETNDESDVVSEPEAAADD) are disordered. Residues 352-372 (DNEETNDESDVVSEPEAAADD) show a composition bias toward acidic residues.

It belongs to the ketol-acid reductoisomerase family. Mg(2+) serves as cofactor.

It catalyses the reaction (2R)-2,3-dihydroxy-3-methylbutanoate + NADP(+) = (2S)-2-acetolactate + NADPH + H(+). The enzyme catalyses (2R,3R)-2,3-dihydroxy-3-methylpentanoate + NADP(+) = (S)-2-ethyl-2-hydroxy-3-oxobutanoate + NADPH + H(+). The protein operates within amino-acid biosynthesis; L-isoleucine biosynthesis; L-isoleucine from 2-oxobutanoate: step 2/4. Its pathway is amino-acid biosynthesis; L-valine biosynthesis; L-valine from pyruvate: step 2/4. Functionally, involved in the biosynthesis of branched-chain amino acids (BCAA). Catalyzes an alkyl-migration followed by a ketol-acid reduction of (S)-2-acetolactate (S2AL) to yield (R)-2,3-dihydroxy-isovalerate. In the isomerase reaction, S2AL is rearranged via a Mg-dependent methyl migration to produce 3-hydroxy-3-methyl-2-ketobutyrate (HMKB). In the reductase reaction, this 2-ketoacid undergoes a metal-dependent reduction by NADPH to yield (R)-2,3-dihydroxy-isovalerate. The chain is Ketol-acid reductoisomerase (NADP(+)) from Haloquadratum walsbyi (strain DSM 16790 / HBSQ001).